Consider the following 258-residue polypeptide: Regulatory protein RecX (258 aa).

This sequence belongs to the RecX family.

It is found in the cytoplasm. Its function is as follows. Modulates RecA activity. The polypeptide is Regulatory protein RecX (Streptococcus thermophilus (strain ATCC BAA-491 / LMD-9)).